Reading from the N-terminus, the 447-residue chain is Cytochrome P450 monooxygenase aunB (447 aa).

Cysteine 386 is a binding site for heme.

It belongs to the cytochrome P450 family. Requires heme as cofactor.

It carries out the reaction 2 fonsecin B + NADPH + O2 + H(+) = aurasperone B + NADP(+) + 2 H2O. The enzyme catalyses 2 rubrofusarin B + NADPH + O2 + H(+) = aurasperone A + NADP(+) + 2 H2O. It participates in secondary metabolite biosynthesis. Functionally, cytochrome P450 monooxygenase; part of the gene cluster that mediates the biosynthesis of aurasperone B, a dimeric gamma-naphthopyrone. The first step in the biosynthesis of aurasperone B is the production of gamma-naphthopyrone precursor YWA1 by the non-reducing polyketide synthase albA, via condensation of one acetyl-CoA starter unit with 6 malonyl-CoA units. YWA1 is then methylated by aunE at position C-6 to yield foncesin which is further methylated at position C-8 by aunD to produce fonsecin B. A key enzyme in the biosynthetic pathway is the cytochrome P450 monooxygenase aunB which catalyzes the oxidative dimerization of fonsecin B to aurasperone B. AunB also catalyzes the oxidative dimerization of rubrofusarin B into aurasperone A. This is Cytochrome P450 monooxygenase aunB from Aspergillus niger (strain ATCC MYA-4892 / CBS 513.88 / FGSC A1513).